Reading from the N-terminus, the 682-residue chain is Zinc finger protein 16 (682 aa).

The span at 1 to 10 (MPSLRTRREE) shows a compositional bias: basic and acidic residues. The disordered stretch occupies residues 1–38 (MPSLRTRREEAEMELSAPGPSPWTPAAQARVSDAPAVT). Residues 62-210 (YQQPDCDTRT…GVPTAESPLI (149 aa)) form a necessary for transcription activation region. The segment at 209–231 (LICNECGKTFRGNPDLIQRQIVH) adopts a C2H2-type 1; degenerate zinc-finger fold. The segment at 237–259 (FMCDDCGKTFSQNSVLKNRHRSH) adopts a C2H2-type 2; degenerate zinc-finger fold. Lys-253 participates in a covalent cross-link: Glycyl lysine isopeptide (Lys-Gly) (interchain with G-Cter in SUMO2). 8 consecutive C2H2-type zinc fingers follow at residues 265-287 (YQCS…QSHH), 293-315 (YTCT…QKSH), 321-343 (YECN…QRIH), 349-371 (YVCS…HRTH), 377-399 (FECG…QRVH), 405-427 (YECN…HRVH), 433-455 (YKCS…RRIH), and 461-483 (HVCN…QIIH). 2 required for nuclear localization regions span residues 268 to 393 (SECG…AHLR) and 341 to 373 (RIHS…THTG). A required for nuclear localization region spans residues 473–503 (SSVLRKHQIIHTGEKPYRCSVCGKAFSHSSA). Residue Lys-487 is modified to N6-acetyllysine. 7 C2H2-type zinc fingers span residues 489–511 (YRCS…QGVH), 517–539 (YACH…QRVH), 545–567 (YECT…QRIH), 573–595 (HECN…QKVH), 601–623 (YTCV…QIIH), 629–651 (YKCS…QRIH), and 657–679 (YDCA…QLIH).

Belongs to the krueppel C2H2-type zinc-finger protein family. As to quaternary structure, interacts with INCA1; the interaction inhibits INCA1 activity and induces the cell cycle process.

It localises to the nucleus. Functionally, acts as a transcriptional activator. Promotes cell proliferation by facilitating the cell cycle phase transition from the S to G2/M phase. Involved in both the hemin- and phorbol myristate acetate (PMA)-induced erythroid and megakaryocytic differentiation, respectively. Also plays a role as an inhibitor of cell apoptosis. This is Zinc finger protein 16 (ZNF16) from Pan troglodytes (Chimpanzee).